The primary structure comprises 422 residues: UDP-N-acetylglucosamine 1-carboxyvinyltransferase (422 aa).

22–23 (KN) contributes to the phosphoenolpyruvate binding site. Arg-93 contacts UDP-N-acetyl-alpha-D-glucosamine. Cys-117 (proton donor) is an active-site residue. Cys-117 is subject to 2-(S-cysteinyl)pyruvic acid O-phosphothioketal. Residues 122–126 (RPVDQ), Asp-305, and Ile-327 each bind UDP-N-acetyl-alpha-D-glucosamine.

This sequence belongs to the EPSP synthase family. MurA subfamily.

Its subcellular location is the cytoplasm. It carries out the reaction phosphoenolpyruvate + UDP-N-acetyl-alpha-D-glucosamine = UDP-N-acetyl-3-O-(1-carboxyvinyl)-alpha-D-glucosamine + phosphate. It participates in cell wall biogenesis; peptidoglycan biosynthesis. Cell wall formation. Adds enolpyruvyl to UDP-N-acetylglucosamine. In Bordetella petrii (strain ATCC BAA-461 / DSM 12804 / CCUG 43448), this protein is UDP-N-acetylglucosamine 1-carboxyvinyltransferase.